Consider the following 422-residue polypeptide: Histidinol dehydrogenase (422 aa).

Positions 123, 183, and 206 each coordinate NAD(+). Ser-229, Gln-251, and His-254 together coordinate substrate. 2 residues coordinate Zn(2+): Gln-251 and His-254. Catalysis depends on proton acceptor residues Glu-320 and His-321. His-321, Asp-354, Glu-408, and His-413 together coordinate substrate. Asp-354 contributes to the Zn(2+) binding site. Residue His-413 participates in Zn(2+) binding.

This sequence belongs to the histidinol dehydrogenase family. The cofactor is Zn(2+).

The catalysed reaction is L-histidinol + 2 NAD(+) + H2O = L-histidine + 2 NADH + 3 H(+). It functions in the pathway amino-acid biosynthesis; L-histidine biosynthesis; L-histidine from 5-phospho-alpha-D-ribose 1-diphosphate: step 9/9. Functionally, catalyzes the sequential NAD-dependent oxidations of L-histidinol to L-histidinaldehyde and then to L-histidine. The polypeptide is Histidinol dehydrogenase (Haloarcula marismortui (strain ATCC 43049 / DSM 3752 / JCM 8966 / VKM B-1809) (Halobacterium marismortui)).